A 261-amino-acid polypeptide reads, in one-letter code: UPF0246 protein Vapar_1301 (261 aa).

Belongs to the UPF0246 family.

The chain is UPF0246 protein Vapar_1301 from Variovorax paradoxus (strain S110).